We begin with the raw amino-acid sequence, 797 residues long: Trafficking protein particle complex subunit 12 (797 aa).

Disordered stretches follow at residues 1–257 (META…PSLS) and 286–338 (SNPN…VPES). Low complexity predominate over residues 9–23 (QSPSEASPSAQAGPE). The segment covering 29–43 (MSREEESQPLYHEET) has biased composition (basic and acidic residues). Acidic residues predominate over residues 47–58 (GGDEFASEENEP). 2 stretches are compositionally biased toward basic and acidic residues: residues 66–75 (FGDKLNEHMM) and 107–121 (ATDH…KEVV). Residues S125 and S128 each carry the phosphoserine modification. Phosphothreonine is present on T130. Residues 173-185 (VGPKDSLAPREEQ) are compositionally biased toward basic and acidic residues. The segment covering 206–216 (IFSQATATPSQ) has biased composition (polar residues). Low complexity predominate over residues 232–244 (SPSFSSTSETSAK). Residues S234, S309, and S314 each carry the phosphoserine modification. 4 TPR repeats span residues 607–640 (GRVL…YPEQ), 642–675 (PQLL…TQKL), 682–715 (IMVL…DPTN), and 716–749 (AVAN…DPRH).

Component of the multisubunit TRAPP (transport protein particle) complex, which includes at least TRAPPC2, TRAPPC2L, TRAPPC3, TRAPPC3L, TRAPPC4, TRAPPC5, TRAPPC8, TRAPPC9, TRAPPC10, TRAPPC11 and TRAPPC12. Interacts with CENPE. Phosphorylated as the cells enter mitosis but is dephosphorylated at or before the onset of anaphase. The phosphorylated form recruits CENPE to kinetochores more efficiently than the non-phosphorylated form.

The protein resides in the endoplasmic reticulum-Golgi intermediate compartment. Its subcellular location is the nucleus. Component of the TRAPP complex, which is involved in endoplasmic reticulum to Golgi apparatus trafficking at a very early stage. Also plays a role in chromosome congression, kinetochore assembly and stability and controls the recruitment of CENPE to the kinetochores. In Mus musculus (Mouse), this protein is Trafficking protein particle complex subunit 12.